We begin with the raw amino-acid sequence, 185 residues long: Acireductone dioxygenase (185 aa).

The Fe(2+) site is built by histidine 96, histidine 98, glutamate 102, and histidine 140. Positions 96, 98, 102, and 140 each coordinate Ni(2+).

This sequence belongs to the acireductone dioxygenase (ARD) family. In terms of assembly, monomer. Fe(2+) is required as a cofactor. It depends on Ni(2+) as a cofactor.

It catalyses the reaction 1,2-dihydroxy-5-(methylsulfanyl)pent-1-en-3-one + O2 = 3-(methylsulfanyl)propanoate + CO + formate + 2 H(+). The catalysed reaction is 1,2-dihydroxy-5-(methylsulfanyl)pent-1-en-3-one + O2 = 4-methylsulfanyl-2-oxobutanoate + formate + 2 H(+). It participates in amino-acid biosynthesis; L-methionine biosynthesis via salvage pathway; L-methionine from S-methyl-5-thio-alpha-D-ribose 1-phosphate: step 5/6. Catalyzes 2 different reactions between oxygen and the acireductone 1,2-dihydroxy-3-keto-5-methylthiopentene (DHK-MTPene) depending upon the metal bound in the active site. Fe-containing acireductone dioxygenase (Fe-ARD) produces formate and 2-keto-4-methylthiobutyrate (KMTB), the alpha-ketoacid precursor of methionine in the methionine recycle pathway. Ni-containing acireductone dioxygenase (Ni-ARD) produces methylthiopropionate, carbon monoxide and formate, and does not lie on the methionine recycle pathway. The protein is Acireductone dioxygenase of Hahella chejuensis (strain KCTC 2396).